Consider the following 140-residue polypeptide: Nucleoside diphosphate kinase (140 aa).

The ATP site is built by lysine 11, phenylalanine 59, arginine 87, threonine 93, arginine 104, and asparagine 114. The Pros-phosphohistidine intermediate role is filled by histidine 117.

The protein belongs to the NDK family. Homotetramer. Mg(2+) serves as cofactor.

The protein resides in the cytoplasm. It carries out the reaction a 2'-deoxyribonucleoside 5'-diphosphate + ATP = a 2'-deoxyribonucleoside 5'-triphosphate + ADP. The enzyme catalyses a ribonucleoside 5'-diphosphate + ATP = a ribonucleoside 5'-triphosphate + ADP. Its function is as follows. Major role in the synthesis of nucleoside triphosphates other than ATP. The ATP gamma phosphate is transferred to the NDP beta phosphate via a ping-pong mechanism, using a phosphorylated active-site intermediate. The sequence is that of Nucleoside diphosphate kinase from Erythrobacter litoralis (strain HTCC2594).